Consider the following 279-residue polypeptide: 3-methyl-2-oxobutanoate hydroxymethyltransferase (279 aa).

Residues D44 and D83 each coordinate Mg(2+). 3-methyl-2-oxobutanoate contacts are provided by residues 44 to 45 (DS), D83, and K113. E115 contributes to the Mg(2+) binding site. Catalysis depends on E182, which acts as the Proton acceptor.

Belongs to the PanB family. Homodecamer; pentamer of dimers. The cofactor is Mg(2+).

The protein resides in the cytoplasm. The enzyme catalyses 3-methyl-2-oxobutanoate + (6R)-5,10-methylene-5,6,7,8-tetrahydrofolate + H2O = 2-dehydropantoate + (6S)-5,6,7,8-tetrahydrofolate. It participates in cofactor biosynthesis; (R)-pantothenate biosynthesis; (R)-pantoate from 3-methyl-2-oxobutanoate: step 1/2. Catalyzes the reversible reaction in which hydroxymethyl group from 5,10-methylenetetrahydrofolate is transferred onto alpha-ketoisovalerate to form ketopantoate. In Desulfotalea psychrophila (strain LSv54 / DSM 12343), this protein is 3-methyl-2-oxobutanoate hydroxymethyltransferase.